Here is a 275-residue protein sequence, read N- to C-terminus: Formamidopyrimidine-DNA glycosylase (275 aa).

The Schiff-base intermediate with DNA role is filled by P2. The active-site Proton donor is the E3. The active-site Proton donor; for beta-elimination activity is the K58. DNA contacts are provided by H91, R109, and K154. The segment at 240 to 274 adopts an FPG-type zinc-finger fold; it reads AVYERAGLACRVCGTPIRRLVQGQRATYFCPHCQK. Catalysis depends on R264, which acts as the Proton donor; for delta-elimination activity.

The protein belongs to the FPG family. In terms of assembly, monomer. Zn(2+) serves as cofactor.

The catalysed reaction is Hydrolysis of DNA containing ring-opened 7-methylguanine residues, releasing 2,6-diamino-4-hydroxy-5-(N-methyl)formamidopyrimidine.. It catalyses the reaction 2'-deoxyribonucleotide-(2'-deoxyribose 5'-phosphate)-2'-deoxyribonucleotide-DNA = a 3'-end 2'-deoxyribonucleotide-(2,3-dehydro-2,3-deoxyribose 5'-phosphate)-DNA + a 5'-end 5'-phospho-2'-deoxyribonucleoside-DNA + H(+). Involved in base excision repair of DNA damaged by oxidation or by mutagenic agents. Acts as a DNA glycosylase that recognizes and removes damaged bases. Has a preference for oxidized purines, such as 7,8-dihydro-8-oxoguanine (8-oxoG). Has AP (apurinic/apyrimidinic) lyase activity and introduces nicks in the DNA strand. Cleaves the DNA backbone by beta-delta elimination to generate a single-strand break at the site of the removed base with both 3'- and 5'-phosphates. This is Formamidopyrimidine-DNA glycosylase from Bordetella avium (strain 197N).